The primary structure comprises 262 residues: tRNA pseudouridine synthase A (262 aa).

The active-site Nucleophile is D54. Y113 contacts substrate.

It belongs to the tRNA pseudouridine synthase TruA family. Homodimer.

It catalyses the reaction uridine(38/39/40) in tRNA = pseudouridine(38/39/40) in tRNA. In terms of biological role, formation of pseudouridine at positions 38, 39 and 40 in the anticodon stem and loop of transfer RNAs. In Lactobacillus delbrueckii subsp. bulgaricus (strain ATCC BAA-365 / Lb-18), this protein is tRNA pseudouridine synthase A.